A 60-amino-acid chain; its full sequence is Acidic phospholipase A2 (60 aa).

Ca(2+) is bound by residues tyrosine 27, glycine 29, and glycine 31. Cysteine 28 and cysteine 44 are disulfide-bonded. Histidine 47 is an active-site residue. Position 48 (aspartate 48) interacts with Ca(2+).

It belongs to the phospholipase A2 family. Group II subfamily. D49 sub-subfamily. As to quaternary structure, monomer. Ca(2+) is required as a cofactor. As to expression, expressed by the venom gland.

Its subcellular location is the secreted. The catalysed reaction is a 1,2-diacyl-sn-glycero-3-phosphocholine + H2O = a 1-acyl-sn-glycero-3-phosphocholine + a fatty acid + H(+). Snake venom phospholipase A2 (PLA2) that exhibits an indirect hemolytic activity, a low myotoxicity, and induces edema. In addition, this enzyme has been shown to induce the release of some pro- and anti-inflammatory cytokines from human PBMC (IL12B, TNF-alpha, IL1B and IL6 but not variation has been observed for IL-8 and IL-10). PLA2 catalyzes the calcium-dependent hydrolysis of the 2-acyl groups in 3-sn-phosphoglycerides. This is Acidic phospholipase A2 from Bothrops leucurus (Whitetail lancehead).